The chain runs to 187 residues: Shikimate kinase (187 aa).

19-24 (GSGKST) is an ATP binding site. Mg(2+) is bound at residue Ser-23. Residues Asp-41, Arg-65, and Gly-87 each contribute to the substrate site. Residue Arg-124 participates in ATP binding. Arg-143 is a substrate binding site. Arg-160 is a binding site for ATP.

Belongs to the shikimate kinase family. As to quaternary structure, monomer. The cofactor is Mg(2+).

It localises to the cytoplasm. The enzyme catalyses shikimate + ATP = 3-phosphoshikimate + ADP + H(+). The protein operates within metabolic intermediate biosynthesis; chorismate biosynthesis; chorismate from D-erythrose 4-phosphate and phosphoenolpyruvate: step 5/7. Catalyzes the specific phosphorylation of the 3-hydroxyl group of shikimic acid using ATP as a cosubstrate. In Rippkaea orientalis (strain PCC 8801 / RF-1) (Cyanothece sp. (strain PCC 8801)), this protein is Shikimate kinase.